A 173-amino-acid polypeptide reads, in one-letter code: Photosystem I assembly protein Ycf3 (173 aa).

TPR repeat units lie at residues 35–68 (AFYY…EKDP), 72–105 (SFIL…NPNL), and 120–153 (GNKL…APYN).

It belongs to the Ycf3 family.

It is found in the plastid. It localises to the chloroplast thylakoid membrane. Functionally, essential for the assembly of the photosystem I (PSI) complex. May act as a chaperone-like factor to guide the assembly of the PSI subunits. This chain is Photosystem I assembly protein Ycf3, found in Cyanidium caldarium (Red alga).